The sequence spans 239 residues: MVQLWKLVLLCGLLAGTSESLLDIRGNDVLRRLISGLERGLGTFDSTIEIIFQNLKTELESRCLNDVVEETQQTENSLEGLISRIFQVVNRLTGVRIRNVQVPDITFEATSENSADVSIPITADVTVSLPLLGEIVKLDLNVDLQTSVSIETDAETGDSRVVVGECPNNPESISLTVLHRRPGLLNDVVDFGVNLVRQLVSSVVQHELCPRIRELLESLDTECIKKLIGEPQVTTQQEI.

Positions 1-20 (MVQLWKLVLLCGLLAGTSES) are cleaved as a signal peptide. The cysteines at positions 166 and 209 are disulfide-linked.

Belongs to the BPI/LBP/Plunc superfamily. Plunc family. Detected in salivary tissues: parotid, submandibular and sublingual glands.

Its subcellular location is the secreted. The polypeptide is Short palate, lung and nasal epithelium carcinoma-associated protein 2A (SPLUNC2A) (Bos taurus (Bovine)).